The chain runs to 172 residues: MIIYRDLISHDEMFSDIYKIREVADGLCLEVEGKMVSRTEGNIDDSLIGGNASAEGPEGEGTESTVITGVDIVMNHHLQETSFTKEAYKKYIKDYMKSIKGKLEEQRPERVKPFMTGAAEQIKHILANFKNYQFFIGENMNPDGMVALLDYREDGVTPYMIFFKDGLEMEKC.

The 172-residue stretch at 1–172 (MIIYRDLISH…FKDGLEMEKC (172 aa)) folds into the TCTP domain. Phosphoserine; by PLK1 is present on Ser46. At Ser53 the chain carries Phosphoserine. Position 64 is a phosphoserine; by PLK1 (Ser64). Residues 70 to 172 (VDIVMNHHLQ…FKDGLEMEKC (103 aa)) are required for reduction of TSC22D1 protein stability.

This sequence belongs to the TCTP family. As to quaternary structure, homodimer. Interacts with STEAP3. Interacts with TSC22D1; interaction results in the destabilization of TSC22D1 protein.

It is found in the cytoplasm. Involved in calcium binding and microtubule stabilization. Acts as a negative regulator of TSC22D1-mediated apoptosis, via interaction with and destabilization of TSC22D1 protein. The chain is Translationally-controlled tumor protein (TPT1) from Bos taurus (Bovine).